The following is a 663-amino-acid chain: MNIEEAKQRIEQLTETINYHNKLYYTDDNPEIEDYEYDKLFRELENLEREFPELKKDDSPTNKVGGTILEKFEKFEHPIAMYSLSNVMNEEEFLEFDNRMQKELNQSKIKYTVENKFDGLALELIYEKGKLTVASTRGDGQVGENVTNNVKMMSNVPKSIKEKKKLIVRGEALITKKDFEALNKEREELEEIPFANARNAASGGLRQLDSAESKKRRLKFFAYQIANYKDFDLTNEYKSMEFLSELGFTVEGVHPNIDAKKVLETYYDIQEKRSKMDYEIDGLVIKVDDVKHQEKLGFLSRAPRFAVAFKFKPEEKETVLKNIEVQVGRTGALTPVAKLEPVQVGGVTVSNVTLHNPNEIKSKDIRIGDTVVVIRSGDVIPKITRVVLEKRTADSKPFEFPKKCPVCGGDTAVTDGDVIVRCINEECPSKITRYIEYFVSKPAMNMERIGKEWIAVFTKSGLVKTPADLYKITRDDLFKFERMGEKLAGYMLESIENSKNTTLKRFIYALGIRQVGETTADLLAKYFTSIENFKKATIDDLQNIEGIGEISAKSIYDFLHNEKTLKLIDDLLASGVNPVFEKVVTVESPLTGKNVVITGSIEGFTRNSAKEAAERLGATVQSAVSKNTNILIVGEKAGSKLKKAQDLGVEIMEADEFIKLANG.

Residues 34–38 (DYEYD), 83–84 (SL), and E114 each bind NAD(+). The active-site N6-AMP-lysine intermediate is the K116. R137, E171, K286, and K310 together coordinate NAD(+). Zn(2+) is bound by residues C404, C407, C422, and C427. Residues 585 to 663 (TVESPLTGKN…ADEFIKLANG (79 aa)) form the BRCT domain.

This sequence belongs to the NAD-dependent DNA ligase family. LigA subfamily. It depends on Mg(2+) as a cofactor. Requires Mn(2+) as cofactor.

It carries out the reaction NAD(+) + (deoxyribonucleotide)n-3'-hydroxyl + 5'-phospho-(deoxyribonucleotide)m = (deoxyribonucleotide)n+m + AMP + beta-nicotinamide D-nucleotide.. Functionally, DNA ligase that catalyzes the formation of phosphodiester linkages between 5'-phosphoryl and 3'-hydroxyl groups in double-stranded DNA using NAD as a coenzyme and as the energy source for the reaction. It is essential for DNA replication and repair of damaged DNA. The protein is DNA ligase of Brachyspira hyodysenteriae (strain ATCC 49526 / WA1).